Here is a 214-residue protein sequence, read N- to C-terminus: Putative F-box protein At3g58910 (214 aa).

Residues 1–47 form the F-box domain; sequence MDRVSSLPDELLCHILSFLTTKETALTSLLSKREIIPLIKSVVFPTL.

This Arabidopsis thaliana (Mouse-ear cress) protein is Putative F-box protein At3g58910.